Consider the following 511-residue polypeptide: GMP synthase [glutamine-hydrolyzing] (511 aa).

In terms of domain architecture, Glutamine amidotransferase type-1 spans 5–195 (DILVLDFGSQ…AKYACNCESI (191 aa)). C82 acts as the Nucleophile in catalysis. Catalysis depends on residues H169 and E171. The GMPS ATP-PPase domain maps to 196–386 (WNMGSFAKTQ…LGLSKEVVYR (191 aa)). 223-229 (SGGVDSS) is an ATP binding site.

As to quaternary structure, homodimer.

The catalysed reaction is XMP + L-glutamine + ATP + H2O = GMP + L-glutamate + AMP + diphosphate + 2 H(+). It functions in the pathway purine metabolism; GMP biosynthesis; GMP from XMP (L-Gln route): step 1/1. In terms of biological role, catalyzes the synthesis of GMP from XMP. This chain is GMP synthase [glutamine-hydrolyzing] (guaA), found in Campylobacter jejuni subsp. jejuni serotype O:2 (strain ATCC 700819 / NCTC 11168).